The primary structure comprises 742 residues: 5-methyltetrahydropteroyltriglutamate--homocysteine methyltransferase (742 aa).

Residues 18–21 and Lys112 each bind 5-methyltetrahydropteroyltri-L-glutamate; that span reads REWK. L-homocysteine contacts are provided by residues 420 to 422 and Glu473; that span reads IGS. Residues 420 to 422 and Glu473 each bind L-methionine; that span reads IGS. Trp550 contributes to the 5-methyltetrahydropteroyltri-L-glutamate binding site. Asp588 contacts L-homocysteine. Asp588 is a binding site for L-methionine. Glu594 provides a ligand contact to 5-methyltetrahydropteroyltri-L-glutamate. Zn(2+)-binding residues include His630, Cys632, and Glu654. The Proton donor role is filled by His683. A Zn(2+)-binding site is contributed by Cys715.

This sequence belongs to the vitamin-B12 independent methionine synthase family. It depends on Zn(2+) as a cofactor.

The enzyme catalyses 5-methyltetrahydropteroyltri-L-glutamate + L-homocysteine = tetrahydropteroyltri-L-glutamate + L-methionine. The protein operates within amino-acid biosynthesis; L-methionine biosynthesis via de novo pathway; L-methionine from L-homocysteine (MetE route): step 1/1. Catalyzes the transfer of a methyl group from 5-methyltetrahydrofolate to homocysteine resulting in methionine formation. This is 5-methyltetrahydropteroyltriglutamate--homocysteine methyltransferase from Staphylococcus aureus (strain bovine RF122 / ET3-1).